The chain runs to 297 residues: Tyrosine recombinase XerD (297 aa).

A Core-binding (CB) domain is found at M1 to I87. The region spanning K108–Q291 is the Tyr recombinase domain. Residues R147, K171, H243, R246, and H269 contribute to the active site. Residue Y278 is the O-(3'-phospho-DNA)-tyrosine intermediate of the active site.

The protein belongs to the 'phage' integrase family. XerD subfamily. As to quaternary structure, forms a cyclic heterotetrameric complex composed of two molecules of XerC and two molecules of XerD.

It localises to the cytoplasm. Its function is as follows. Site-specific tyrosine recombinase, which acts by catalyzing the cutting and rejoining of the recombining DNA molecules. The XerC-XerD complex is essential to convert dimers of the bacterial chromosome into monomers to permit their segregation at cell division. It also contributes to the segregational stability of plasmids. The polypeptide is Tyrosine recombinase XerD (Oceanobacillus iheyensis (strain DSM 14371 / CIP 107618 / JCM 11309 / KCTC 3954 / HTE831)).